The following is a 342-amino-acid chain: N-acetyl-gamma-glutamyl-phosphate reductase (342 aa).

Residue Cys-147 is part of the active site.

The protein belongs to the NAGSA dehydrogenase family. Type 1 subfamily.

It is found in the cytoplasm. The catalysed reaction is N-acetyl-L-glutamate 5-semialdehyde + phosphate + NADP(+) = N-acetyl-L-glutamyl 5-phosphate + NADPH + H(+). It participates in amino-acid biosynthesis; L-arginine biosynthesis; N(2)-acetyl-L-ornithine from L-glutamate: step 3/4. Functionally, catalyzes the NADPH-dependent reduction of N-acetyl-5-glutamyl phosphate to yield N-acetyl-L-glutamate 5-semialdehyde. The polypeptide is N-acetyl-gamma-glutamyl-phosphate reductase (Campylobacter jejuni subsp. jejuni serotype O:6 (strain 81116 / NCTC 11828)).